We begin with the raw amino-acid sequence, 163 residues long: Lipoprotein signal peptidase (163 aa).

The next 3 membrane-spanning stretches (helical) occupy residues 11 to 31 (ILIA…IATT), 63 to 83 (KMTF…YFFI), and 88 to 108 (YNLF…GNFI). Residues D118 and D136 contribute to the active site. Residues 131–151 (IFNIADSSLTIGVILIIIALL) form a helical membrane-spanning segment.

This sequence belongs to the peptidase A8 family.

The protein localises to the cell membrane. The enzyme catalyses Release of signal peptides from bacterial membrane prolipoproteins. Hydrolyzes -Xaa-Yaa-Zaa-|-(S,diacylglyceryl)Cys-, in which Xaa is hydrophobic (preferably Leu), and Yaa (Ala or Ser) and Zaa (Gly or Ala) have small, neutral side chains.. It functions in the pathway protein modification; lipoprotein biosynthesis (signal peptide cleavage). In terms of biological role, this protein specifically catalyzes the removal of signal peptides from prolipoproteins. This is Lipoprotein signal peptidase from Staphylococcus aureus (strain MRSA252).